The sequence spans 216 residues: Large ribosomal subunit protein bL25 (216 aa).

The segment at 191–216 (LVSAESEEDEDAPAADEVPATEVSEE) is disordered. The segment covering 195–204 (ESEEDEDAPA) has biased composition (acidic residues).

Belongs to the bacterial ribosomal protein bL25 family. CTC subfamily. As to quaternary structure, part of the 50S ribosomal subunit; part of the 5S rRNA/L5/L18/L25 subcomplex. Contacts the 5S rRNA. Binds to the 5S rRNA independently of L5 and L18.

Its function is as follows. This is one of the proteins that binds to the 5S RNA in the ribosome where it forms part of the central protuberance. This is Large ribosomal subunit protein bL25 from Jannaschia sp. (strain CCS1).